The chain runs to 404 residues: DNA polymerase processivity factor BMRF1 (404 aa).

The tract at residues 1 to 300 (METTQTLRFK…SVILFNHASE (300 aa)) is homodimerization; DNA binding and DNA polymerase processivity. Residues 301–404 (EAAASTASEP…KVKQAFNPLI (104 aa)) form a transcriptional activation region. The segment at 302-404 (AAASTASEPE…KVKQAFNPLI (103 aa)) is disordered. Pro residues predominate over residues 335–344 (SPSPPPPPRT). Serine 337 bears the Phosphoserine mark. Threonine 344 bears the Phosphothreonine mark. Residue serine 349 is modified to Phosphoserine. A Phosphothreonine modification is found at threonine 355.

This sequence belongs to the herpesviridae DNA polymerase accessory subunit family. Homodimer. Two dimers can adopt a tetrameric ring-like structure. Forms a complex with the DNA-binding protein BALF2, the DNA polymerase subunit BALF5, and the alkaline exonuclease BGLF5. Interacts (via N-terminus) with BZLF1 (via bZIP domain); this interaction may inhibit BZLF1-induced transcription of the BMRF1 promoter. Interacts (via C-terminus) with host NuRD complex; this interaction is important for transcriptional activation of EBV promoters and inhibition of the ubiquitination step of DDR signaling. In terms of processing, phosphorylated by the viral BGLF4 kinase.

The protein localises to the virion tegument. It localises to the host nucleus. Functionally, acts as a DNA polymerase processivity factor; a transcriptional activator for several EBV promoters and inhibits the host DNA damage response (DDR) to double-stranded DNA breaks. Plays an essential role in the viral lytic DNA replication by acting as a polymerase accessory subunit. Stimulates the viral DNA polymerase activity and appears to function with it as a holoenzyme. Increases the processivity of the viral polymerase, probably by acting as a sliding clamp that prevents dissociation of the polymerase from the active template. In addition, BMRF1 transcriptionally activates the oriLyt early BHLF1 promoter. Promotes G1/S cell cycle arrest through p53 induction. This Epstein-Barr virus (strain AG876) (HHV-4) protein is DNA polymerase processivity factor BMRF1.